A 273-amino-acid chain; its full sequence is Undecaprenyl-diphosphatase (273 aa).

8 helical membrane passes run 13-35 (GLVEGFTEFLPISSTGHLIVFGN), 45-62 (VFEIAIQLGAVLAVVFEY), 82-102 (FVLNLAIAFIPAAVMGLLFGK), 108-128 (LFNPLSVAVMLVLGGLFILWV), 144-164 (ALRPIDALMIGVAQVFALIPG), 186-206 (TEFSFFLAVPMMVAATAYDVL), 219-239 (LILIGFVAAFVSGLVAVKALL), and 250-270 (FAYYRIVFGIAIIILWLSGWI).

It belongs to the UppP family.

The protein resides in the cell inner membrane. The catalysed reaction is di-trans,octa-cis-undecaprenyl diphosphate + H2O = di-trans,octa-cis-undecaprenyl phosphate + phosphate + H(+). In terms of biological role, catalyzes the dephosphorylation of undecaprenyl diphosphate (UPP). Confers resistance to bacitracin. This Neisseria meningitidis serogroup C (strain 053442) protein is Undecaprenyl-diphosphatase.